The primary structure comprises 511 residues: Maturase K (511 aa).

Belongs to the intron maturase 2 family. MatK subfamily.

Its subcellular location is the plastid. It localises to the chloroplast. Functionally, usually encoded in the trnK tRNA gene intron. Probably assists in splicing its own and other chloroplast group II introns. The chain is Maturase K from Avena sativa (Oat).